Reading from the N-terminus, the 161-residue chain is Abscisic acid receptor PYL11 (161 aa).

An START-like region spans residues threonine 3 to glutamate 154. Abscisate is bound by residues lysine 39, alanine 68–glutamate 73, arginine 95–serine 101, and glutamate 119. Residues serine 64–alanine 68 carry the Gate loop motif. Residues histidine 94–leucine 96 carry the Latch loop motif.

The protein belongs to the PYR/PYL/RCAR abscisic acid intracellular receptor family. Homodimer. Binds ABA on one subunit only. Interacts with PP2Cs. Binds to CARs protein in an ABA-independent manner, both at the plasma membrane and in the nucleus. Interacts with I-2 and TOPP1.

Its subcellular location is the cytoplasm. It localises to the nucleus. The protein localises to the cell membrane. Receptor for abscisic acid (ABA) required for ABA-mediated responses such as stomatal closure and germination inhibition. Inhibits the activity of group-A protein phosphatases type 2C (PP2Cs) when activated by ABA. Suppresses the phosphatase activity of TOPP1 in a dose-dependent manner in vitro. This chain is Abscisic acid receptor PYL11 (PYL11), found in Arabidopsis thaliana (Mouse-ear cress).